We begin with the raw amino-acid sequence, 898 residues long: MAAPAAAAVEEGMEPRALQYEQTLMYGRYTQDLGAFAKEEAARIRLGGPEPWRSPPSPRTPPELLEYGQSRCARCRMCSVRCHKFLVSRVGEDWIFLVLLGLLMALVSWAMDYAIAACLQAQQWMSRGLNTNLLLQYLAWVTYPVVLITFSAGFTQILAPQAVGSGIPEMKTILRGVVLKEYLTLKTFVAKVIGLTCALGSGMPLGKEGPFVHIASMCAALLSKFLSLFGGIYENESRNTEMLAAACAVGVGCCFAAPIGGVLFSIEVTSTFFAVRNYWRGFFAATFSAFIFRVLAVWNRDEETITALFKTRFRLDFPFDLQELPAFAVIGIASGFGGALFVYLNRKIVQVMRKQKTINRFLMRKRLLFPALVTLLISTLTFPPGFGQFMAGQLSQKETLVTLFDNRTWVRQGLVEELEPPSTSQAWSPPRANVFLTLVIFILMKFWMSALATTIPVPCGAFMPVFVIGAAFGRLVGESMAAWFPDGIHTDSSTYRIVPGGYAVVGAAALAGAVTHTVSTAVIVFELTGQIAHILPVMIAVILANAVAQSLQPSLYDSIIRIKKLPYLPELGWGRHQQYRVRVEDIMVRDVPHVALSCTFRDLRLALHRTKGRTLALVESPESMILLGSIERTQVVALLAAQLSPARRRQSKQKRRVAHTSPPSCQESPPSPETSVCFQVKAEDAQGEPHKPLKPALKRGCSNSVNLGESPTGHVESAGIALRSLFCGSPPPEAASESEKSESSEKRKSKRVRISLASDSDLEGEMSPEEILEWEEQQLDEPVNFSDCKIDPAPFQLVERTSLHKTHTIFSLLGVDHAYVTSIGRLIGIVTLKELRKAIEGSVTAQGVKVRPPLASFRDSATSSSDTETTEVHALWGPRSRHGLPREGSPSDSDDKCQ.

The Cytoplasmic segment spans residues Met-1–Val-90. Residues Gln-19 to Ala-37 form an essential for channel gating by both voltage and cell volume region. Thr-23 is modified (phosphothreonine). The modulates channel gating by both voltage and cell volume stretch occupies residues Glu-39 to Trp-52. The next 2 helical transmembrane spans lie at Gly-91–Trp-124 and Leu-133–Leu-158. The short motif at Gly-164–Pro-168 is the Selectivity filter part_1 element. The segment at residues Ile-167–Leu-174 is an intramembrane region (helical). Transmembrane regions (helical) follow at residues Leu-183–Ser-201 and Glu-208–Leu-226. The Selectivity filter part_2 motif lies at Gly-206–Pro-210. Intramembrane regions (helical) lie at residues Met-242–Cys-254 and Pro-258–Ile-266. 5 consecutive transmembrane segments (helical) span residues Tyr-278–Trp-298, Leu-324–Met-352, Phe-361–Leu-380, Ala-432–Ala-452, and Gly-460–Trp-483. Residues Gly-460–Pro-464 carry the Selectivity filter part_3 motif. An intramembrane region (helical) is located at residues Gly-500–Val-514. Residues Thr-515 to His-516 constitute an intramembrane region (note=Loop between two helices). The segment at residues Thr-517–Thr-528 is an intramembrane region (helical). Residues Gly-529 to His-533 constitute an intramembrane region (note=Loop between two helices). Residues Ile-534 to Leu-551 form a helical membrane-spanning segment. Topologically, residues Gln-552–Gln-898 are cytoplasmic. Positions Met-587 to Pro-645 constitute a CBS 1 domain. Residues Arg-647–Ala-658 show a composition bias toward basic residues. Residues Arg-647–Ser-675 are disordered. Ser-710 bears the Phosphoserine mark. The tract at residues Phe-726–Met-766 is disordered. Residues Glu-737 to Lys-746 are compositionally biased toward basic and acidic residues. Ser-758 carries the phosphoserine modification. Positions Ile-790–Val-850 constitute a CBS 2 domain. The Basolateral membrane sorting motif lies at Leu-812–Leu-813. Residues Ser-856–Gln-898 are disordered.

This sequence belongs to the chloride channel (TC 2.A.49) family. ClC-2/CLCN2 subfamily. Homodimer. Interacts with auxiliary subunit HEPACAM. In terms of processing, phosphorylated. Activated by dephosphorylation. As to expression, ubiquitously expressed.

It localises to the cell membrane. The protein resides in the basolateral cell membrane. It is found in the cell projection. The protein localises to the dendritic spine membrane. Its subcellular location is the axon. The catalysed reaction is chloride(in) = chloride(out). It catalyses the reaction thiocyanate(in) = thiocyanate(out). The enzyme catalyses bromide(in) = bromide(out). It carries out the reaction nitrate(in) = nitrate(out). The catalysed reaction is iodide(out) = iodide(in). Its activity is regulated as follows. Common gate kinetics are down-regulated by intracellular ATP. Inhibited by AK-42, a derivative of meclofenamate. Inhibited by Cd(2+). Inhibited by Zn(2+) and PKC activation. Inhibited at acidic pH. CCLN2:HEPACAM channel conductance is up-regulated upon hypo-osmolarity. In terms of biological role, voltage-gated and osmosensitive chloride channel. Forms a homodimeric channel where each subunit has its own ion conduction pathway. Conducts double-barreled currents controlled by two types of gates, two fast glutamate gates that control each subunit independently and a slow common gate that opens and shuts off both subunits simultaneously. Displays inward rectification currents activated upon membrane hyperpolarization and extracellular hypotonicity. Contributes to chloride conductance involved in neuron excitability. In hippocampal neurons, generates a significant part of resting membrane conductance and provides an additional chloride efflux pathway to prevent chloride accumulation in dendrites upon GABA receptor activation. In glia, associates with the auxiliary subunit HEPACAM/GlialCAM at astrocytic processes and myelinated fiber tracts where it may regulate transcellular chloride flux buffering extracellular chloride and potassium concentrations. Regulates aldosterone production in adrenal glands. The opening of CLCN2 channels at hyperpolarized membrane potentials in the glomerulosa causes cell membrane depolarization, activation of voltage-gated calcium channels and increased expression of aldosterone synthase, the rate-limiting enzyme for aldosterone biosynthesis. Contributes to chloride conductance in retinal pigment epithelium involved in phagocytosis of shed photoreceptor outer segments and photoreceptor renewal. Conducts chloride currents at the basolateral membrane of epithelial cells with a role in chloride reabsorption rather than secretion. Permeable to small monovalent anions with chloride &gt; thiocyanate &gt; bromide &gt; nitrate &gt; iodide ion selectivity. The protein is Chloride channel protein 2 (CLCN2) of Oryctolagus cuniculus (Rabbit).